Reading from the N-terminus, the 512-residue chain is Maturase K (512 aa).

Belongs to the intron maturase 2 family. MatK subfamily.

It is found in the plastid. The protein localises to the chloroplast. Functionally, usually encoded in the trnK tRNA gene intron. Probably assists in splicing its own and other chloroplast group II introns. The sequence is that of Maturase K from Lilium regale (Regal lily).